The primary structure comprises 287 residues: Thymidylate synthase (287 aa).

A dUMP-binding site is contributed by R21. (6R)-5,10-methylene-5,6,7,8-tetrahydrofolate is bound at residue N51. 150 to 151 contacts dUMP; it reads RR. C170 serves as the catalytic Nucleophile. DUMP is bound by residues 190-193, N201, and 231-233; these read RSGD and HIY. (6R)-5,10-methylene-5,6,7,8-tetrahydrofolate is bound at residue D193. Position 286 (A286) interacts with (6R)-5,10-methylene-5,6,7,8-tetrahydrofolate.

It belongs to the thymidylate synthase family. Bacterial-type ThyA subfamily. As to quaternary structure, homodimer.

Its subcellular location is the cytoplasm. It carries out the reaction dUMP + (6R)-5,10-methylene-5,6,7,8-tetrahydrofolate = 7,8-dihydrofolate + dTMP. Its pathway is pyrimidine metabolism; dTTP biosynthesis. In terms of biological role, catalyzes the reductive methylation of 2'-deoxyuridine-5'-monophosphate (dUMP) to 2'-deoxythymidine-5'-monophosphate (dTMP) while utilizing 5,10-methylenetetrahydrofolate (mTHF) as the methyl donor and reductant in the reaction, yielding dihydrofolate (DHF) as a by-product. This enzymatic reaction provides an intracellular de novo source of dTMP, an essential precursor for DNA biosynthesis. This Mycoplasma genitalium (strain ATCC 33530 / DSM 19775 / NCTC 10195 / G37) (Mycoplasmoides genitalium) protein is Thymidylate synthase.